Consider the following 469-residue polypeptide: DNA-binding transcriptional regulator NtrC (469 aa).

The 115-residue stretch at 5 to 119 (IVWVVDDDSS…EAVALVERAI (115 aa)) folds into the Response regulatory domain. The residue at position 54 (D54) is a 4-aspartylphosphate. One can recognise a Sigma-54 factor interaction domain in the interval 140–369 (MIGEAPAMQD…LENTCRWLTV (230 aa)). Residues 168-175 (GESGTGKE) and 231-240 (ADGGTLFLDE) contribute to the ATP site. The H-T-H motif DNA-binding region spans 445-464 (KQEAARLLGWGRNTLTRKLK).

Post-translationally, phosphorylated and dephosphorylated by NtrB.

It is found in the cytoplasm. In terms of biological role, member of the two-component regulatory system NtrB/NtrC, which controls expression of the nitrogen-regulated (ntr) genes in response to nitrogen limitation. Phosphorylated NtrC binds directly to DNA and stimulates the formation of open promoter-sigma54-RNA polymerase complexes. This chain is DNA-binding transcriptional regulator NtrC (glnG), found in Salmonella typhimurium (strain LT2 / SGSC1412 / ATCC 700720).